Consider the following 353-residue polypeptide: Protein AC18 (353 aa).

Its subcellular location is the host nucleus. The protein localises to the host cytoplasm. Functionally, may play a role in occlusion-derived virions (ODV) formation and/or regulation of late viral gene expression. This chain is Protein AC18 (DA41), found in Autographa californica nuclear polyhedrosis virus (AcMNPV).